A 265-amino-acid chain; its full sequence is 14-3-3-like protein GF14 nu (265 aa).

Phosphoserine is present on residues S67, S109, and S190. Phosphothreonine is present on T211. The disordered stretch occupies residues 242–265 (AGGDEIKEASKHEPEEGKPAETGQ). Residues 245–265 (DEIKEASKHEPEEGKPAETGQ) are compositionally biased toward basic and acidic residues.

It belongs to the 14-3-3 family. In terms of assembly, component of the SERK1 signaling complex, composed of KAPP, CDC48A, GRF6 or GRF7, SERK1, SERK2, SERK3/BAK1 and BRI1. Interacts with DREB1A and DREB1B in the nucleus. Interacts with CINV1.

The protein localises to the nucleus. It is found in the cytoplasm. Is associated with a DNA binding complex that binds to the G box, a well-characterized cis-acting DNA regulatory element found in plant genes. The protein is 14-3-3-like protein GF14 nu (GRF7) of Arabidopsis thaliana (Mouse-ear cress).